The chain runs to 98 residues: SPbeta prophage-derived uncharacterized protein YorB (98 aa).

This chain is SPbeta prophage-derived uncharacterized protein YorB (yorB), found in Bacillus subtilis (strain 168).